The primary structure comprises 251 residues: 2,3-bisphosphoglycerate-dependent phosphoglycerate mutase (251 aa).

Residues 11 to 18 (RHGESDWN), 24 to 25 (TG), Arg-63, 90 to 93 (ERHY), Lys-101, 117 to 118 (RR), and 184 to 185 (GN) contribute to the substrate site. His-12 acts as the Tele-phosphohistidine intermediate in catalysis. Glu-90 functions as the Proton donor/acceptor in the catalytic mechanism.

The protein belongs to the phosphoglycerate mutase family. BPG-dependent PGAM subfamily.

It catalyses the reaction (2R)-2-phosphoglycerate = (2R)-3-phosphoglycerate. It functions in the pathway carbohydrate degradation; glycolysis; pyruvate from D-glyceraldehyde 3-phosphate: step 3/5. Catalyzes the interconversion of 2-phosphoglycerate and 3-phosphoglycerate. This Mycobacterium marinum (strain ATCC BAA-535 / M) protein is 2,3-bisphosphoglycerate-dependent phosphoglycerate mutase.